The primary structure comprises 272 residues: Phosphate import ATP-binding protein PstB 1 (272 aa).

One can recognise an ABC transporter domain in the interval 26–267; that stretch reads ITIENLDLHY…PMKKQTEDYI (242 aa). 58–65 serves as a coordination point for ATP; the sequence is GPSGCGKS.

The protein belongs to the ABC transporter superfamily. Phosphate importer (TC 3.A.1.7) family. The complex is composed of two ATP-binding proteins (PstB), two transmembrane proteins (PstC and PstA) and a solute-binding protein (PstS).

Its subcellular location is the cell inner membrane. It catalyses the reaction phosphate(out) + ATP + H2O = ADP + 2 phosphate(in) + H(+). Its function is as follows. Part of the ABC transporter complex PstSACB involved in phosphate import. Responsible for energy coupling to the transport system. In Vibrio vulnificus (strain YJ016), this protein is Phosphate import ATP-binding protein PstB 1.